The chain runs to 242 residues: Glycerol-3-phosphate acyltransferase (242 aa).

6 helical membrane-spanning segments follow: residues 7 to 27, 61 to 81, 102 to 122, 135 to 155, 162 to 182, and 201 to 221; these read ISLL…IMFA, IAIG…ILLI, YYLT…PVYF, GFVF…WWTI, VSLA…IPWL, and DWYI…IIIW.

The protein belongs to the PlsY family. As to quaternary structure, probably interacts with PlsX.

Its subcellular location is the cell membrane. The catalysed reaction is an acyl phosphate + sn-glycerol 3-phosphate = a 1-acyl-sn-glycero-3-phosphate + phosphate. Its pathway is lipid metabolism; phospholipid metabolism. Its function is as follows. Catalyzes the transfer of an acyl group from acyl-phosphate (acyl-PO(4)) to glycerol-3-phosphate (G3P) to form lysophosphatidic acid (LPA). This enzyme utilizes acyl-phosphate as fatty acyl donor, but not acyl-CoA or acyl-ACP. This Mycoplasmoides gallisepticum (strain R(low / passage 15 / clone 2)) (Mycoplasma gallisepticum) protein is Glycerol-3-phosphate acyltransferase.